Here is a 35-residue protein sequence, read N- to C-terminus: Somatostatin (35 aa).

Residues cysteine 24 and cysteine 35 are joined by a disulfide bond.

Belongs to the somatostatin family.

The protein resides in the secreted. In terms of biological role, somatostatin inhibits the release of somatotropin. The polypeptide is Somatostatin (sst) (Lampetra fluviatilis (European river lamprey)).